The following is a 106-amino-acid chain: Replication restart protein PriB (106 aa).

Residues 4-103 (VNRLVLSGTV…LHAEQIELID (100 aa)) form the SSB domain.

It belongs to the PriB family. Homodimer. Interacts with PriA and DnaT. Component of the replication restart primosome. Primosome assembly occurs via a 'hand-off' mechanism. PriA binds to replication forks, subsequently PriB then DnaT bind; DnaT then displaces ssDNA to generate the helicase loading substrate.

In terms of biological role, involved in the restart of stalled replication forks, which reloads the replicative helicase on sites other than the origin of replication; the PriA-PriB pathway is the major replication restart pathway. During primosome assembly it facilitates complex formation between PriA and DnaT on DNA; stabilizes PriA on DNA. Stimulates the DNA unwinding activity of PriA helicase. The protein is Replication restart protein PriB of Pectobacterium carotovorum subsp. carotovorum (strain PC1).